A 141-amino-acid chain; its full sequence is ER membrane protein complex subunit 5 (141 aa).

Over 1 to 6 (MSFVSK) the chain is Cytoplasmic. Residues 7-27 (LLYTVSALVLFHSGFSSYEFH) traverse the membrane as a helical segment. Topologically, residues 28-48 (HLLKLNSLNNAQGAISKLPKD) are lumenal. A helical transmembrane segment spans residues 49–69 (IMYETYAGLILFVLAVFTSFE). Residues 70–141 (KLQYLPIESN…WASNTVKKEK (72 aa)) lie on the Cytoplasmic side of the membrane.

This sequence belongs to the membrane magnesium transporter (TC 1.A.67) family. As to quaternary structure, component of the ER membrane protein complex (EMC), which is composed of EMC1, EMC2, EMC3, EMC4, EMC5 and EMC6.

It is found in the endoplasmic reticulum membrane. Functionally, part of the endoplasmic reticulum membrane protein complex (EMC) that enables the energy-independent insertion into endoplasmic reticulum membranes of newly synthesized membrane proteins. Preferentially accommodates proteins with transmembrane domains that are weakly hydrophobic or contain destabilizing features such as charged and aromatic residues. Involved in the cotranslational insertion of multi-pass membrane proteins in which stop-transfer membrane-anchor sequences become ER membrane spanning helices. It is also required for the post-translational insertion of tail-anchored/TA proteins in endoplasmic reticulum membranes. By mediating the proper cotranslational insertion of N-terminal transmembrane domains in an N-exo topology, with translocated N-terminus in the lumen of the ER, controls the topology of multi-pass membrane proteins. The sequence is that of ER membrane protein complex subunit 5 (EMC5) from Saccharomyces cerevisiae (strain ATCC 204508 / S288c) (Baker's yeast).